Reading from the N-terminus, the 556-residue chain is MAFTDLLDALGGVGRFQLVYTALLLLPCGLLACHTFLQNFTAAAPPHHCQHPANYTEPTTNVSGVWLRAAIPLNQHGDPEPCRRYVEPQWALLKPNASSHGVATEGCKDGWVYDRSIFPSTIVMEWDLVCEARTLRDLAQSIYMSGVLVGAALFGGLADRLGRKAPLVWSYLQLAVSGAATAYVGSFSAYCVFRFLMGMTFSGIILNSLSLVVEWMPTRGRTVAGILLGFSFTLGQLILAGVAYLIRPWRWLQFAVSAPFLVFFLYSWWLPESSRWLLLHGKAQQAVQNLQKVAMMNGRKAEGERLTTEVVSSYIQDEFASVRTSNSILDLFRTPAIRRVTCCLMGVWFSNSVAYYGLAMDLQKFGLSIYLVQALFGIIDIPAMLVATTTMIYVGRRATVSSFLILAGLMVIANMFMPEDLQTLRTVQAALGKGCLASSFICVYLFTGELYPTEIRQMGMGFASVNARLGGLVAPLITTLGEISPVLPPVSFGATSVLAGMAVACFLTETRNVPLVETIAAMERRVKQGRSKRDTEQKSEEISLQQLGASPLKETI.

Over 1 to 15 (MAFTDLLDALGGVGR) the chain is Cytoplasmic. A helical transmembrane segment spans residues 16–36 (FQLVYTALLLLPCGLLACHTF). Topologically, residues 37–137 (LQNFTAAAPP…LVCEARTLRD (101 aa)) are extracellular. Residues Asn39, Asn54, Asn61, and Asn96 are each glycosylated (N-linked (GlcNAc...) asparagine). A helical membrane pass occupies residues 138 to 158 (LAQSIYMSGVLVGAALFGGLA). Topologically, residues 159–166 (DRLGRKAP) are cytoplasmic. A helical membrane pass occupies residues 167 to 187 (LVWSYLQLAVSGAATAYVGSF). At 188-194 (SAYCVFR) the chain is on the extracellular side. The helical transmembrane segment at 195-215 (FLMGMTFSGIILNSLSLVVEW) threads the bilayer. The Cytoplasmic portion of the chain corresponds to 216-225 (MPTRGRTVAG). The helical transmembrane segment at 226 to 246 (ILLGFSFTLGQLILAGVAYLI) threads the bilayer. The Extracellular segment spans residues 247–250 (RPWR). Residues 251–271 (WLQFAVSAPFLVFFLYSWWLP) form a helical membrane-spanning segment. The Cytoplasmic segment spans residues 272 to 339 (ESSRWLLLHG…DLFRTPAIRR (68 aa)). Residues 340–360 (VTCCLMGVWFSNSVAYYGLAM) traverse the membrane as a helical segment. The Extracellular portion of the chain corresponds to 361 to 366 (DLQKFG). The chain crosses the membrane as a helical span at residues 367–387 (LSIYLVQALFGIIDIPAMLVA). The Cytoplasmic segment spans residues 388 to 397 (TTTMIYVGRR). Residues 398 to 418 (ATVSSFLILAGLMVIANMFMP) traverse the membrane as a helical segment. Residues 419 to 425 (EDLQTLR) lie on the Extracellular side of the membrane. Residues 426–446 (TVQAALGKGCLASSFICVYLF) form a helical membrane-spanning segment. Over 447–457 (TGELYPTEIRQ) the chain is Cytoplasmic. The helical transmembrane segment at 458-478 (MGMGFASVNARLGGLVAPLIT) threads the bilayer. Residues 479–485 (TLGEISP) are Extracellular-facing. A helical membrane pass occupies residues 486–506 (VLPPVSFGATSVLAGMAVACF). At 507–556 (LTETRNVPLVETIAAMERRVKQGRSKRDTEQKSEEISLQQLGASPLKETI) the chain is on the cytoplasmic side. A compositionally biased stretch (basic and acidic residues) spans 526–541 (VKQGRSKRDTEQKSEE). Residues 526 to 556 (VKQGRSKRDTEQKSEEISLQQLGASPLKETI) form a disordered region.

The protein belongs to the major facilitator (TC 2.A.1) superfamily. Organic cation transporter (TC 2.A.1.19) family. In terms of tissue distribution, highly expressed in olfactory mucosa. Weakly expressed in testis. Not detected in heart, spleen, lung, kidney or brain.

The protein resides in the membrane. Organic anion transporter that mediates the uptake of estrone sulfate. Inhibited by probenecid, propionate, 2-methylbutyrate, 3-methylbutyrate, benzoate, heptanoate and 2-ethylhaxanoate. May act as an odorant transporter. The protein is Solute carrier family 22 member 20 (Slc22a20) of Mus musculus (Mouse).